The chain runs to 626 residues: Serine/threonine-protein kinase ATG1a (626 aa).

The 259-residue stretch at tyrosine 10–leucine 268 folds into the Protein kinase domain. ATP contacts are provided by residues isoleucine 16 to valine 24 and lysine 39. The Proton acceptor role is filled by aspartate 132. Residues lysine 288–glutamate 308 show a composition bias toward polar residues. Residues lysine 288–serine 347 form a disordered region. The segment covering serine 315 to serine 325 has biased composition (low complexity). Over residues serine 330–glutamate 339 the composition is skewed to basic and acidic residues. An AIM (Atg8-family-interacting motif) motif is present at residues tyrosine 360–valine 363.

The protein belongs to the protein kinase superfamily. Ser/Thr protein kinase family. As to quaternary structure, interacts with ATG13A. Interacts with ATG8E. Binds to ATG8E on autophagic vesicles. Phosphorylated during nutrient starvation. Dephosphorylated in nutrient-rich conditions.

Its subcellular location is the cytoplasmic vesicle. It localises to the autophagosome. Its function is as follows. Serine/threonine protein kinase involved in autophagy in a nutritional condition-dependent manner. The ATG1-ATG13 protein kinase complex regulates downstream events required for autophagosome enclosure and/or vacuolar delivery. Becomes a target of autophagy under nutrient starvation. Connects autophagy to plant nutritional status. In Arabidopsis thaliana (Mouse-ear cress), this protein is Serine/threonine-protein kinase ATG1a.